The chain runs to 222 residues: MTILRLNGGKILNEKVHEIGVIAMGSYLENHGSALPIDTDIKIASYVSLMACIKTGAKFLGTVIPSTEYSYVKHGIHNKVSDIVEYLTFLLTWAKRIGIKKVIIVNCHGGNILAEKEIKELENLINIKIKFLSFPLTHAATEELSIGYVIGIANKEKMKEHKPENYAEIGMVGLREAREKNKEIDEEAKRVEKEGVKIDEELGKKLLDEFINKVVNEITNFL.

Fe cation-binding residues include E29, H31, D40, and H108.

Belongs to the creatininase superfamily. FAPy deformylase family. Homodimer. The cofactor is Fe(2+). Requires Zn(2+) as cofactor.

It carries out the reaction 2-amino-5-formylamino-6-(5-phospho-D-ribosylamino)pyrimidin-4(3H)-one + H2O = 2,5-diamino-6-(1-D-ribosylamino)pyrimidin-4(3H)-one 5'-phosphate + formate + H(+). It participates in cofactor biosynthesis; coenzyme F420 biosynthesis. It functions in the pathway cofactor biosynthesis; riboflavin biosynthesis. In terms of biological role, catalyzes the hydrolysis of the formamide of 2-amino-5-formylamino-6-ribosylamino-4(3H)-pyrimidinone 5'-monophosphate (FAPy) to form 2,5-diamino-6-ribosylamino-4(3H)-pyrimidinone 5'-phosphate (APy). This Methanocaldococcus infernus (strain DSM 11812 / JCM 15783 / ME) protein is 2-amino-5-formylamino-6-ribosylaminopyrimidin-4(3H)-one 5'-monophosphate deformylase.